Reading from the N-terminus, the 495-residue chain is Neuronal acetylcholine receptor subunit beta-4 (495 aa).

A signal peptide spans 1 to 20 (MRGTPLLLVSLFSLLQDGDC). The Extracellular portion of the chain corresponds to 21 to 235 (RLANAEEKLM…IIKRKPLFYT (215 aa)). Asn35, Asn92, Asn137, and Asn165 each carry an N-linked (GlcNAc...) asparagine glycan. Cys152 and Cys166 form a disulfide bridge. Residues 236–256 (INLIIPCVLITSLAILVFYLP) form a helical membrane-spanning segment. Residues 257–264 (SDCGEKMT) are Cytoplasmic-facing. Residue Glu261 participates in Na(+) binding. Residues 265 to 285 (LCISVLLALTFFLLLISKIVP) form a helical membrane-spanning segment. Residues 286–297 (PTSLDIPLIGKY) lie on the Extracellular side of the membrane. The helical transmembrane segment at 298-318 (LLFTMVLVTFSIVTTVCVLNV) threads the bilayer. The Cytoplasmic segment spans residues 319–463 (HHRSPSTHTM…WKFVAMVVDR (145 aa)). The chain crosses the membrane as a helical span at residues 464–484 (LFLWVFVFVCILGTMGLFLPP). Residues 485–495 (LFQIHAPSKDS) are Extracellular-facing.

Belongs to the ligand-gated ion channel (TC 1.A.9) family. Acetylcholine receptor (TC 1.A.9.1) subfamily. Beta-4/CHRNB4 sub-subfamily. Neuronal AChR is composed of two different types of subunits: alpha and beta. CHRNB4/Beta-4 subunit can be combined to CHRNA2/alpha-2, CHRNA3/alpha-3 or CHRNA4/alpha-4, CHRNA5/alpha-5 and CHRNB3/beta-3 to give rise to functional receptors. Forms stoichiometries such as (CHRNA3)2:(CHRNB4)3 or (CHRNA3:CHRNB4)2:CHRNB3. Interacts with RIC3; which is required for proper folding and assembly. Interacts with LYPD6. As to expression, in the brain, it is detected in the medial habenula. In the peripheral nervous system, it is found at least in the adrenal gland.

Its subcellular location is the synaptic cell membrane. The protein resides in the cell membrane. The enzyme catalyses Ca(2+)(in) = Ca(2+)(out). The catalysed reaction is K(+)(in) = K(+)(out). It catalyses the reaction Na(+)(in) = Na(+)(out). Activated by a myriad of ligands such as acetylcholine, cytisine, nicotine, choline and epibatidine. nAChR activity is inhibited by the antagonist alpha-conotoxins BuIA and MII, small disulfide-constrained peptides from cone snails. The heteropentamer CHRNA3:CHRNB4 activity is blocked by the alpha-conotoxin ImI and AuIB. Functionally, component of neuronal acetylcholine receptors (nAChRs) that function as pentameric, ligand-gated cation channels with high calcium permeability among other activities. nAChRs are excitatory neurotrasnmitter receptors formed by a collection of nAChR subunits known to mediate synaptic transmission in the nervous system and the neuromuscular junction. Each nAchR subunit confers differential attributes to channel properties, including activation, deactivation and desensitization kinetics, pH sensitivity, cation permeability, and binding to allosteric modulators. CHRNB4 forms heteropentameric neuronal acetylcholine receptors with CHRNA2, CHRNA3 and CHRNA4, as well as CHRNA5 and CHRNB3 as accesory subunits. CHRNA3:CHRNB4 being predominant in neurons of the autonomic ganglia, it is known as ganglionic nicotinic receptor. CHRNA3:CHRNB4 or CHRNA3:CHRNA5:CHRNB4 play also an important role in the habenulo-interpeduncular tract, modulating the mesolimbic dopamine system and affecting reward circuits and addiction. Hypothalamic CHRNA3:CHRNB4 nAChR activation by nicotine leads to activation of POMC neurons and a decrease in food intake. The chain is Neuronal acetylcholine receptor subunit beta-4 (Chrnb4) from Rattus norvegicus (Rat).